The primary structure comprises 236 residues: MPAYKRVLLKLSGEALMGDDAFGINRSTIEAMVNDIAEIVKLGVQVAVVIGGGNIFRGVAGGAAGMDRATADYMGMLATMMNALALQDAMRHANIEGRVQSALRMDQVVEPYIRPRAIRQLEEGKVVIFAAGTGNPFFTTDTAAALRGSEIGAEVVLKATKVDGVYTADPKKDPSATRYTTISFDEAISRNLQVMDATAFALCRDQKLPIRVFSIVKPGALKRIILGEDEGTLVHV.

10 to 13 (KLSG) provides a ligand contact to ATP. Gly-52 contributes to the UMP binding site. ATP-binding residues include Gly-53 and Arg-57. Residues Asp-72 and 133–140 (TGNPFFTT) each bind UMP. Residues Thr-160, Tyr-166, and Asp-169 each coordinate ATP.

Belongs to the UMP kinase family. In terms of assembly, homohexamer.

It localises to the cytoplasm. The catalysed reaction is UMP + ATP = UDP + ADP. The protein operates within pyrimidine metabolism; CTP biosynthesis via de novo pathway; UDP from UMP (UMPK route): step 1/1. With respect to regulation, inhibited by UTP. Functionally, catalyzes the reversible phosphorylation of UMP to UDP. The polypeptide is Uridylate kinase (Cupriavidus necator (strain ATCC 17699 / DSM 428 / KCTC 22496 / NCIMB 10442 / H16 / Stanier 337) (Ralstonia eutropha)).